Here is a 282-residue protein sequence, read N- to C-terminus: Aquaporin NIP1-1 (282 aa).

2 consecutive transmembrane segments (helical) span residues 46 to 66 (IIAEIFGTYFLMFAGCGAVTI) and 74 to 94 (ITFPGVAIVWGLAVMVMVYAV). Residues 103-105 (NPA) carry the NPA 1 motif. Transmembrane regions (helical) follow at residues 125 to 145 (VLAQMLGATLASGTLRLMFGG), 162 to 182 (SLVIEIITTFYLMFVISGVAT), and 186 to 206 (AIGELAGLAVGATILLNVLIA). The short motif at 215–217 (NPA) is the NPA 2 element. Residues 232 to 252 (IWVYVVGPVVGAVAGAWAYNL) traverse the membrane as a helical segment.

This sequence belongs to the MIP/aquaporin (TC 1.A.8) family. NIP (TC 1.A.8.12) subfamily.

Its subcellular location is the membrane. In terms of biological role, aquaporins facilitate the transport of water and small neutral solutes across cell membranes. This chain is Aquaporin NIP1-1 (NIP1-1), found in Zea mays (Maize).